Reading from the N-terminus, the 197-residue chain is Heart- and neural crest derivatives-expressed protein 1 (197 aa).

Disordered stretches follow at residues 61–94 (VVGPSQTSGRIENLGGKLGRRKGAPPKKERRRTE) and 155–184 (VDGKRRREPQPTEGYWGAAPAGEKKLKGRT). Positions 78 to 90 (LGRRKGAPPKKER) are enriched in basic residues. A bHLH domain is found at 80 to 132 (RRKGAPPKKERRRTESINSAFAELRECIPNVPADTKLSKIKTLRLATSYIGYL).

In terms of assembly, efficient DNA binding requires dimerization with another bHLH protein. Highly expressed in the adult heart and expressed at lower levels in the intestine and gall bladder.

It localises to the nucleus. The protein localises to the nucleolus. Plays an essential role in cardiac morphogenesis. In Xenopus laevis (African clawed frog), this protein is Heart- and neural crest derivatives-expressed protein 1 (hand1).